A 641-amino-acid chain; its full sequence is NADH-ubiquinone oxidoreductase chain 5 (641 aa).

Helical transmembrane passes span 1–21 (MYLT…VIGR), 33–53 (SLSI…IVLL), 59–79 (ITIY…WAFY), 83–103 (ISIT…LYSI), 121–141 (LFTF…MFVG), 175–195 (VGDL…GSSD), 211–231 (ITIV…QLGL), 243–263 (TPVS…YLIL), 276–296 (LICV…TGLF), 303–322 (VIAY…LGLS), 367–387 (ILPF…ALPF), 405–425 (FLVT…ITAF), 453–473 (PLIM…IGYI), 476–496 (KHLS…VGTL), 512–532 (FGVQ…ALIV), 564–584 (WFDN…GGIF), and 621–641 (IPHY…SIFI).

It belongs to the complex I subunit 5 family.

Its subcellular location is the mitochondrion inner membrane. It catalyses the reaction a ubiquinone + NADH + 5 H(+)(in) = a ubiquinol + NAD(+) + 4 H(+)(out). Core subunit of the mitochondrial membrane respiratory chain NADH dehydrogenase (Complex I) that is believed to belong to the minimal assembly required for catalysis. Complex I functions in the transfer of electrons from NADH to the respiratory chain. The immediate electron acceptor for the enzyme is believed to be ubiquinone. This is NADH-ubiquinone oxidoreductase chain 5 (ND5) from Allomyces macrogynus.